We begin with the raw amino-acid sequence, 271 residues long: Formamidopyrimidine-DNA glycosylase (271 aa).

The Schiff-base intermediate with DNA role is filled by proline 2. The active-site Proton donor is the glutamate 3. Lysine 56 serves as the catalytic Proton donor; for beta-elimination activity. DNA contacts are provided by histidine 89, arginine 107, and arginine 151. The segment at 236 to 270 adopts an FPG-type zinc-finger fold; the sequence is MVYARQGQPCRVCATPIKSLRQGQRSTFYCPHCQK. Arginine 260 acts as the Proton donor; for delta-elimination activity in catalysis.

The protein belongs to the FPG family. As to quaternary structure, monomer. Requires Zn(2+) as cofactor.

It carries out the reaction Hydrolysis of DNA containing ring-opened 7-methylguanine residues, releasing 2,6-diamino-4-hydroxy-5-(N-methyl)formamidopyrimidine.. It catalyses the reaction 2'-deoxyribonucleotide-(2'-deoxyribose 5'-phosphate)-2'-deoxyribonucleotide-DNA = a 3'-end 2'-deoxyribonucleotide-(2,3-dehydro-2,3-deoxyribose 5'-phosphate)-DNA + a 5'-end 5'-phospho-2'-deoxyribonucleoside-DNA + H(+). Functionally, involved in base excision repair of DNA damaged by oxidation or by mutagenic agents. Acts as a DNA glycosylase that recognizes and removes damaged bases. Has a preference for oxidized purines, such as 7,8-dihydro-8-oxoguanine (8-oxoG). Has AP (apurinic/apyrimidinic) lyase activity and introduces nicks in the DNA strand. Cleaves the DNA backbone by beta-delta elimination to generate a single-strand break at the site of the removed base with both 3'- and 5'-phosphates. The chain is Formamidopyrimidine-DNA glycosylase from Albidiferax ferrireducens (strain ATCC BAA-621 / DSM 15236 / T118) (Rhodoferax ferrireducens).